Reading from the N-terminus, the 450-residue chain is Sorting nexin-4 (450 aa).

The residue at position 1 (Met1) is an N-acetylmethionine. The interval 1 to 53 is disordered; it reads MEQAAPDPERLWQPAPLEPLSHPDAGLESMVGEETKGARDEGPGDGTMTENNF. The span at 33–42 shows a compositional bias: basic and acidic residues; it reads EETKGARDEG. One can recognise a PX domain in the interval 61–187; sequence SVSEAEKRTG…YLFLTQEGNW (127 aa). 4 residues coordinate a 1,2-diacyl-sn-glycero-3-phospho-(1D-myo-inositol-3-phosphate): Arg106, Ser108, Lys132, and Arg154.

It belongs to the sorting nexin family. Heterodimer; heterodimerizes with SNX7 or SNX30. Interacts with WWC1/KIBRA. Identified in a complex with WWC1/KIBRA and dynein components DYNLL1 and DYNC1I2. Interacts with BIN1.

The protein resides in the early endosome. The protein localises to the early endosome membrane. Functionally, involved in the regulation of endocytosis and in several stages of intracellular trafficking. Plays a role in recycling endocytosed transferrin receptor and prevent its degradation. Involved in autophagosome assembly by regulating trafficking and recycling of phospholipid scramblase ATG9A. The polypeptide is Sorting nexin-4 (Bos taurus (Bovine)).